A 258-amino-acid polypeptide reads, in one-letter code: 5'-nucleotidase SurE (258 aa).

Residues Asp9, Asp10, Ser42, and Asn96 each contribute to the a divalent metal cation site.

It belongs to the SurE nucleotidase family. A divalent metal cation serves as cofactor.

It is found in the cytoplasm. The catalysed reaction is a ribonucleoside 5'-phosphate + H2O = a ribonucleoside + phosphate. Nucleotidase that shows phosphatase activity on nucleoside 5'-monophosphates. The chain is 5'-nucleotidase SurE from Campylobacter jejuni subsp. doylei (strain ATCC BAA-1458 / RM4099 / 269.97).